The chain runs to 473 residues: NAC domain-containing protein 68 (473 aa).

An NAC domain is found at 4-154; the sequence is GLIGYRFSPT…KYVVCQVKYK (151 aa). A DNA-binding region spans residues 108-160; it reads IGIKKTLVYHEGKSPHGVRTPWVMHEYHITCLPHHKRKYVVCQVKYKGEAAEI. Residues 326-380 form a disordered region; it reads DHMPRKPVTGTIDYSSDSGSDAGSISTTSYQGTSSPNISVGSSSRHLSSCSSTDS. Low complexity-rich tracts occupy residues 340–354 and 364–379; these read SSDS…STTS and SVGS…SSTD. Residues 446–468 form a helical membrane-spanning segment; that stretch reads FIYLMKMIIGNIISVLLPVKRLI.

It localises to the membrane. It is found in the nucleus. Functionally, transcription activator activated by proteolytic cleavage through regulated intramembrane proteolysis (RIP) mediated by calpain or its functional homolog. Regulates cytokinin signaling during cell division. This chain is NAC domain-containing protein 68 (NAC68), found in Arabidopsis thaliana (Mouse-ear cress).